Reading from the N-terminus, the 288-residue chain is UPF0494 membrane protein C212.04c (288 aa).

4 helical membrane-spanning segments follow: residues 107–127, 144–164, 174–194, and 198–218; these read WVLL…KFKI, IWGP…AFNY, PLIS…SVII, and IAGV…GVIA.

Belongs to the UPF0494 family.

The protein resides in the cytoplasm. The protein localises to the endoplasmic reticulum. It is found in the membrane. The polypeptide is UPF0494 membrane protein C212.04c (Schizosaccharomyces pombe (strain 972 / ATCC 24843) (Fission yeast)).